Here is a 119-residue protein sequence, read N- to C-terminus: Ribonuclease P protein component (119 aa).

Belongs to the RnpA family. Consists of a catalytic RNA component (M1 or rnpB) and a protein subunit.

It catalyses the reaction Endonucleolytic cleavage of RNA, removing 5'-extranucleotides from tRNA precursor.. RNaseP catalyzes the removal of the 5'-leader sequence from pre-tRNA to produce the mature 5'-terminus. It can also cleave other RNA substrates such as 4.5S RNA. The protein component plays an auxiliary but essential role in vivo by binding to the 5'-leader sequence and broadening the substrate specificity of the ribozyme. This Escherichia coli O157:H7 protein is Ribonuclease P protein component.